The following is a 673-amino-acid chain: Pesticin receptor (673 aa).

The signal sequence occupies residues 1–22 (MKMTRLYPLALGGLLLPAIANA). Residues 30-37 (STLEVTAS) carry the TonB box motif. The TBDR plug domain occupies 41-155 (SRSASANNVS…QGGIINIVTQ (115 aa)). The region spanning 160–672 (TPRGYIEGGV…TVGINTRIDF (513 aa)) is the TBDR beta-barrel domain. Positions 657-673 (QVNMGRTVGINTRIDFF) match the TonB C-terminal box motif.

The protein belongs to the TonB-dependent receptor family.

It localises to the cell outer membrane. Functionally, receptor for the bacteriocin pesticin and for the siderophore yersiniabactin. The chain is Pesticin receptor (fyuA) from Yersinia enterocolitica.